The chain runs to 371 residues: MYNESPIIRRKSSRIYVGDVPIGDGAPIAVQSMTNTRTTDVAATVAQIKALENVGADIVRVSVPTMDAAEAFKLIKQQTNVPLVADIHFDYRIALKVAEYGVDCLRINPGNIGNEERIRSVVECARDKNIPIRIGVNGGSLEKELMDKYKEPTPEALLESAMRHVDILDRLNFDQFKVSVKASDVFLAVESYRLLAKQIVQPLHLGITEAGGARAGSVKSAVGLGMLLADGIGDTLRISLAADPVEEIKVGFDILKSLRIRSRGINFIACPSCSRQEFDVISTVNELEQRLEDVVTPMDVSIIGCVVNGPGEALISDIGLTGGNRMSGYYKDGVRQKERFDNNNIVDQLEAKIRAKVAMSESRIPAQDVTK.

Residues Cys-270, Cys-273, Cys-305, and Glu-312 each contribute to the [4Fe-4S] cluster site.

Belongs to the IspG family. The cofactor is [4Fe-4S] cluster.

The catalysed reaction is (2E)-4-hydroxy-3-methylbut-2-enyl diphosphate + oxidized [flavodoxin] + H2O + 2 H(+) = 2-C-methyl-D-erythritol 2,4-cyclic diphosphate + reduced [flavodoxin]. Its pathway is isoprenoid biosynthesis; isopentenyl diphosphate biosynthesis via DXP pathway; isopentenyl diphosphate from 1-deoxy-D-xylulose 5-phosphate: step 5/6. Functionally, converts 2C-methyl-D-erythritol 2,4-cyclodiphosphate (ME-2,4cPP) into 1-hydroxy-2-methyl-2-(E)-butenyl 4-diphosphate. The sequence is that of 4-hydroxy-3-methylbut-2-en-1-yl diphosphate synthase (flavodoxin) from Shewanella piezotolerans (strain WP3 / JCM 13877).